The sequence spans 388 residues: GTPase Obg (388 aa).

The Obg domain occupies 1–159 (MKFVDEAVIR…RSLKLELLLL (159 aa)). One can recognise an OBG-type G domain in the interval 160 to 333 (ADVGLLGMPN…LATKLLDFIQ (174 aa)). GTP is bound by residues 166–173 (GMPNAGKS), 191–195 (FTTLV), 213–216 (DIPG), 283–286 (NKAD), and 314–316 (SAY). Residues Ser-173 and Thr-193 each coordinate Mg(2+).

The protein belongs to the TRAFAC class OBG-HflX-like GTPase superfamily. OBG GTPase family. As to quaternary structure, monomer. Mg(2+) is required as a cofactor.

It localises to the cytoplasm. Functionally, an essential GTPase which binds GTP, GDP and possibly (p)ppGpp with moderate affinity, with high nucleotide exchange rates and a fairly low GTP hydrolysis rate. Plays a role in control of the cell cycle, stress response, ribosome biogenesis and in those bacteria that undergo differentiation, in morphogenesis control. The protein is GTPase Obg of Shewanella sp. (strain MR-4).